The sequence spans 303 residues: Cobalamin biosynthesis protein CobD (303 aa).

4 consecutive transmembrane segments (helical) span residues 65–85, 147–167, 235–255, and 283–303; these read LLAW…IVLL, DAVF…VVLY, AGPV…GAAI, and LVWA…WLYA.

This sequence belongs to the CobD/CbiB family.

Its subcellular location is the cell membrane. Its pathway is cofactor biosynthesis; adenosylcobalamin biosynthesis. Functionally, converts cobyric acid to cobinamide by the addition of aminopropanol on the F carboxylic group. In Stutzerimonas stutzeri (strain A1501) (Pseudomonas stutzeri), this protein is Cobalamin biosynthesis protein CobD.